We begin with the raw amino-acid sequence, 299 residues long: Inactive recombination-promoting nuclease-like protein RpnE (299 aa).

The protein belongs to the Rpn/YhgA-like nuclease family.

In terms of biological role, upon expression has no effect on RecA-independent DNA recombination, cell viability or DNA damage. This chain is Inactive recombination-promoting nuclease-like protein RpnE (yfaD), found in Escherichia coli (strain K12).